The chain runs to 997 residues: Kinesin-like protein KIF19 (997 aa).

The Kinesin motor domain occupies 11–346; the sequence is QLMVALRVRP…LTYAGRAKNI (336 aa). 104-111 contacts ATP; the sequence is GPTGCGKT. Residues 361 to 388 are a coiled coil; the sequence is IAQYTSIIADLRGEIQRLKCKIDQQAGR. Basic and acidic residues predominate over residues 477–494; it reads EERRKESYTKEDSEKDSD. Disordered regions lie at residues 477–509, 665–704, 718–759, and 784–997; these read EERR…EVAS, KITP…GTDS, QVKS…SSEN, and AAQR…LQHN. A coiled-coil region spans residues 506 to 551; that stretch reads EVASARENIAALVGEQKKLRKEKLALEQRCRELRARGRRLEETLPR. The segment covering 683 to 697 has biased composition (polar residues); that stretch reads KTLSSEAQRPQNNTL. Residues 750–759 show a composition bias toward low complexity; the sequence is INSSPESSEN. Composition is skewed to polar residues over residues 835-851 and 950-959; these read TLQH…STGE and PNQNTGSGNP.

This sequence belongs to the TRAFAC class myosin-kinesin ATPase superfamily. Kinesin family. As to expression, strongly expressed in the oviduct and trachea. Expressed in testis, lung, ovary and brain.

The protein localises to the cytoplasm. It is found in the cytoskeleton. Its subcellular location is the cell projection. The protein resides in the cilium. Plus end-directed microtubule-dependent motor protein that regulates the length of motile cilia by mediating depolymerization of microtubules at ciliary tips. The polypeptide is Kinesin-like protein KIF19 (Kif19) (Mus musculus (Mouse)).